Here is a 161-residue protein sequence, read N- to C-terminus: Allophycocyanin alpha chain (161 aa).

The residue at position 71 (Asn71) is an N4-methylasparagine. Cys81 is a (2R,3E)-phycocyanobilin binding site.

The protein belongs to the phycobiliprotein family. Heterodimer of an alpha and a beta chain. Contains one covalently linked phycocyanobilin chromophore.

The protein resides in the cellular thylakoid membrane. Its function is as follows. Light-harvesting photosynthetic bile pigment-protein from the phycobiliprotein complex. Allophycocyanin has a maximum absorption at approximately 650 nanometers. The protein is Allophycocyanin alpha chain (apcA) of Synechocystis sp. (strain PCC 6714) (Aphanocapsa sp. (strain PCC 6714)).